Consider the following 588-residue polypeptide: Sentrin-specific protease 2 (588 aa).

A Nuclear localization signal motif is present at residues 28-31; the sequence is KRRR. Ser32 carries the phosphoserine modification. The Nuclear localization signal motif lies at 47-52; it reads PAKRPR. The interval 157–184 is disordered; it reads EGYNRRPSGRRHSKSNPESSLTWKPQEQ. Over residues 172 to 184 the composition is skewed to polar residues; the sequence is NPESSLTWKPQEQ. The Nuclear export signal motif lies at 316-331; the sequence is MEPDLSEEVSARLRLG. Phosphoserine is present on residues Ser332 and Ser343. The protease stretch occupies residues 394-558; sequence LRITRGDIQT…MFTCKYADYI (165 aa). Active-site residues include His477 and Asp494. Cys547 serves as the catalytic Nucleophile.

Belongs to the peptidase C48 family. Binds to SUMO2 and SUMO3. Interacts with the C-terminal domain of NUP153 via its N-terminus. Interacts with MTA1. In terms of processing, polyubiquitinated; which leads to proteasomal degradation. Highly expressed in testis. Detected in brain, heart and thymus.

It is found in the nucleus. The protein resides in the nuclear pore complex. It localises to the nucleus membrane. Its subcellular location is the cytoplasm. The protein localises to the cytoplasmic vesicle. It is found in the PML body. In terms of biological role, protease that catalyzes two essential functions in the SUMO pathway. The first is the hydrolysis of an alpha-linked peptide bond at the C-terminal end of the small ubiquitin-like modifier (SUMO) propeptides, SUMO1, SUMO2 and SUMO3 leading to the mature form of the proteins. The second is the deconjugation of SUMO1, SUMO2 and SUMO3 from targeted proteins, by cleaving an epsilon-linked peptide bond between the C-terminal glycine of the mature SUMO and the lysine epsilon-amino group of the target protein. May down-regulate CTNNB1 levels and thereby modulate the Wnt pathway. Deconjugates SUMO2 from MTA1. Plays a dynamic role in adipogenesis by desumoylating and promoting the stabilization of CEBPB. Acts as a regulator of the cGAS-STING pathway by catalyzing desumoylation of CGAS and STING1 during the late phase of viral infection. Its function is as follows. Activates transcription. This is Sentrin-specific protease 2 (Senp2) from Mus musculus (Mouse).